Here is a 1002-residue protein sequence, read N- to C-terminus: Protein SMAX1-LIKE 7 (1002 aa).

One can recognise a Clp R domain in the interval 8 to 185 (ARQCLTEETA…DVLHPPVTSQ (178 aa)). Repeat stretches follow at residues 12 to 86 (LTEE…LDRL) and 103 to 185 (VSNS…VTSQ). An EAR motif is present at residues 854–858 (LDLNL).

Belongs to the ClpA/ClpB family. Interacts with TPL/TPR in an EAR-motif dependent manner. Interacts with TPL, TPR1, TPR2 and TPR4. Interacts with MAX2 and TPR2. Interacts with D14. The interaction with D14 occurs in the presence of (2'R) stereoisomers of strigolactones, but not (2'S) stereoisomers. In terms of processing, ubiquitinated upon strigolactone treatment. Strigolactone, but not karrikin, triggers rapid SCF(MAX2)-dependent degradation. Expressed in axillary branches and roots. Detected in seedlings and leaves. Expressed in the primary rosette buds and expanding leaves of adult rosettes, the vasculature of the hypocotyls, cotyledons, and mature roots, and in the midvein and petioles of young leaves.

It localises to the nucleus. In terms of biological role, probable component of a transcriptional corepressor complex involved in branching control. Regulates cotyledon expansion and lateral root growth, but not germination or hypocotyl elongation. Promotes auxin transport and PIN1 accumulation in the stem and represses BRC1/TCP18 expression in axillary buds. The sequence is that of Protein SMAX1-LIKE 7 from Arabidopsis thaliana (Mouse-ear cress).